The sequence spans 73 residues: Large ribosomal subunit protein eL20 (73 aa).

Belongs to the eukaryotic ribosomal protein eL20 family. As to quaternary structure, part of the 50S ribosomal subunit. Binds 23S rRNA.

This Methanococcus aeolicus (strain ATCC BAA-1280 / DSM 17508 / OCM 812 / Nankai-3) protein is Large ribosomal subunit protein eL20.